The following is a 207-amino-acid chain: Small ribosomal subunit protein uS4A (207 aa).

Residues 98–158 enclose the S4 RNA-binding domain; it reads TRLDNVAYRL…EKSKSSAKFK (61 aa).

This sequence belongs to the universal ribosomal protein uS4 family. As to quaternary structure, part of the 30S ribosomal subunit. Contacts protein S5. The interaction surface between S4 and S5 is involved in control of translational fidelity.

In terms of biological role, one of the primary rRNA binding proteins, it binds directly to 16S rRNA where it nucleates assembly of the body of the 30S subunit. With S5 and S12 plays an important role in translational accuracy. The protein is Small ribosomal subunit protein uS4A of Alkaliphilus oremlandii (strain OhILAs) (Clostridium oremlandii (strain OhILAs)).